We begin with the raw amino-acid sequence, 378 residues long: 3-dehydroquinate synthase (378 aa).

Residues 111 to 115 (GVIGD), 135 to 136 (TS), K148, and K157 contribute to the NAD(+) site. Positions 190, 252, and 271 each coordinate Zn(2+).

The protein belongs to the sugar phosphate cyclases superfamily. Dehydroquinate synthase family. The cofactor is NAD(+). Co(2+) is required as a cofactor. It depends on Zn(2+) as a cofactor.

It localises to the cytoplasm. The enzyme catalyses 7-phospho-2-dehydro-3-deoxy-D-arabino-heptonate = 3-dehydroquinate + phosphate. It functions in the pathway metabolic intermediate biosynthesis; chorismate biosynthesis; chorismate from D-erythrose 4-phosphate and phosphoenolpyruvate: step 2/7. Functionally, catalyzes the conversion of 3-deoxy-D-arabino-heptulosonate 7-phosphate (DAHP) to dehydroquinate (DHQ). In Mesorhizobium japonicum (strain LMG 29417 / CECT 9101 / MAFF 303099) (Mesorhizobium loti (strain MAFF 303099)), this protein is 3-dehydroquinate synthase.